Reading from the N-terminus, the 22-residue chain is Brevinin-2LTa (22 aa).

As to expression, expressed by the skin glands.

The protein resides in the secreted. Functionally, has antibacterial activity. In Rana latastei (Italian agile frog), this protein is Brevinin-2LTa.